The chain runs to 158 residues: Transcription elongation factor GreB (158 aa).

Residues 53 to 75 adopt a coiled-coil conformation; it reads KRRLREIDRRVRFLTKRLEVLQI.

It belongs to the GreA/GreB family. GreB subfamily.

Functionally, necessary for efficient RNA polymerase transcription elongation past template-encoded arresting sites. The arresting sites in DNA have the property of trapping a certain fraction of elongating RNA polymerases that pass through, resulting in locked ternary complexes. Cleavage of the nascent transcript by cleavage factors such as GreA or GreB allows the resumption of elongation from the new 3'terminus. GreB releases sequences of up to 9 nucleotides in length. This Haemophilus influenzae (strain ATCC 51907 / DSM 11121 / KW20 / Rd) protein is Transcription elongation factor GreB.